The chain runs to 883 residues: Valine--tRNA ligase (883 aa).

The short motif at 46-56 (PNVTGKLHLGH) is the 'HIGH' region element. A 'KMSKS' region motif is present at residues 520–524 (KMSKS). ATP is bound at residue lysine 523. A coiled-coil region spans residues 809-844 (LADLLNVEEELARLEKELAKWQKELDMVGKKLSNER).

It belongs to the class-I aminoacyl-tRNA synthetase family. ValS type 1 subfamily. As to quaternary structure, monomer.

The protein localises to the cytoplasm. It carries out the reaction tRNA(Val) + L-valine + ATP = L-valyl-tRNA(Val) + AMP + diphosphate. In terms of biological role, catalyzes the attachment of valine to tRNA(Val). As ValRS can inadvertently accommodate and process structurally similar amino acids such as threonine, to avoid such errors, it has a 'posttransfer' editing activity that hydrolyzes mischarged Thr-tRNA(Val) in a tRNA-dependent manner. This chain is Valine--tRNA ligase, found in Streptococcus agalactiae serotype V (strain ATCC BAA-611 / 2603 V/R).